Consider the following 335-residue polypeptide: tRNA pseudouridine synthase D (335 aa).

D77 acts as the Nucleophile in catalysis. The region spanning G152–P308 is the TRUD domain.

Belongs to the pseudouridine synthase TruD family.

The catalysed reaction is uridine(13) in tRNA = pseudouridine(13) in tRNA. In terms of biological role, responsible for synthesis of pseudouridine from uracil-13 in transfer RNAs. This is tRNA pseudouridine synthase D from Histophilus somni (strain 129Pt) (Haemophilus somnus).